The following is an 89-amino-acid chain: Small ribosomal subunit protein uS15 (89 aa).

It belongs to the universal ribosomal protein uS15 family. Part of the 30S ribosomal subunit. Forms a bridge to the 50S subunit in the 70S ribosome, contacting the 23S rRNA.

In terms of biological role, one of the primary rRNA binding proteins, it binds directly to 16S rRNA where it helps nucleate assembly of the platform of the 30S subunit by binding and bridging several RNA helices of the 16S rRNA. Its function is as follows. Forms an intersubunit bridge (bridge B4) with the 23S rRNA of the 50S subunit in the ribosome. The polypeptide is Small ribosomal subunit protein uS15 (Bartonella tribocorum (strain CIP 105476 / IBS 506)).